The chain runs to 329 residues: Fructose-1,6-bisphosphatase class 1 (329 aa).

Residues Glu84, Asp103, Leu105, and Asp106 each coordinate Mg(2+). Substrate-binding positions include 106-109 (DGSS), Asn196, and Lys262. Glu268 provides a ligand contact to Mg(2+).

It belongs to the FBPase class 1 family. As to quaternary structure, homotetramer. The cofactor is Mg(2+).

The protein resides in the cytoplasm. The enzyme catalyses beta-D-fructose 1,6-bisphosphate + H2O = beta-D-fructose 6-phosphate + phosphate. The protein operates within carbohydrate biosynthesis; gluconeogenesis. In Shewanella loihica (strain ATCC BAA-1088 / PV-4), this protein is Fructose-1,6-bisphosphatase class 1.